A 267-amino-acid chain; its full sequence is Probable ribosomal RNA small subunit methyltransferase A (267 aa).

The S-adenosyl-L-methionine site is built by L12, G37, E58, D83, and N100.

The protein belongs to the class I-like SAM-binding methyltransferase superfamily. rRNA adenine N(6)-methyltransferase family. RsmA subfamily.

The protein resides in the cytoplasm. Its function is as follows. Specifically dimethylates two adjacent adenosines in the loop of a conserved hairpin near the 3'-end of 16S rRNA in the 30S particle. May play a critical role in biogenesis of 30S subunits. This chain is Probable ribosomal RNA small subunit methyltransferase A, found in Methanococcus maripaludis (strain DSM 14266 / JCM 13030 / NBRC 101832 / S2 / LL).